The primary structure comprises 266 residues: 3-methyl-2-oxobutanoate hydroxymethyltransferase (266 aa).

Aspartate 46 and aspartate 85 together coordinate Mg(2+). Residues 46 to 47 (DS), aspartate 85, and lysine 115 contribute to the 3-methyl-2-oxobutanoate site. A Mg(2+)-binding site is contributed by glutamate 117. The Proton acceptor role is filled by glutamate 183.

Belongs to the PanB family. As to quaternary structure, homodecamer; pentamer of dimers. Mg(2+) is required as a cofactor.

The protein resides in the cytoplasm. It carries out the reaction 3-methyl-2-oxobutanoate + (6R)-5,10-methylene-5,6,7,8-tetrahydrofolate + H2O = 2-dehydropantoate + (6S)-5,6,7,8-tetrahydrofolate. It functions in the pathway cofactor biosynthesis; (R)-pantothenate biosynthesis; (R)-pantoate from 3-methyl-2-oxobutanoate: step 1/2. Its function is as follows. Catalyzes the reversible reaction in which hydroxymethyl group from 5,10-methylenetetrahydrofolate is transferred onto alpha-ketoisovalerate to form ketopantoate. In Trichlorobacter lovleyi (strain ATCC BAA-1151 / DSM 17278 / SZ) (Geobacter lovleyi), this protein is 3-methyl-2-oxobutanoate hydroxymethyltransferase.